The sequence spans 85 residues: Putative sodium channel toxin Ts37 (85 aa).

The signal sequence occupies residues 1 to 20; it reads MAGEWACLLVSLVLLWGAAG. Positions 22–83 constitute an LCN-type CS-alpha/beta domain; the sequence is RDGFLLDRNF…KIWGDSVRCR (62 aa). 4 disulfide bridges follow: Cys-32–Cys-82, Cys-36–Cys-59, Cys-45–Cys-64, and Cys-49–Cys-66.

This sequence belongs to the long (4 C-C) scorpion toxin superfamily. Sodium channel inhibitor family. In terms of tissue distribution, expressed by the venom gland.

The protein resides in the secreted. Putative sodium channel toxin. The chain is Putative sodium channel toxin Ts37 from Tityus serrulatus (Brazilian scorpion).